The primary structure comprises 258 residues: UPF0246 protein YaaA (258 aa).

The protein belongs to the UPF0246 family.

This is UPF0246 protein YaaA from Escherichia coli O17:K52:H18 (strain UMN026 / ExPEC).